A 164-amino-acid polypeptide reads, in one-letter code: Phosphopantetheine adenylyltransferase (164 aa).

A substrate-binding site is contributed by S9. ATP is bound by residues 9–10 and H17; that span reads SF. Residues K41, V78, and R92 each contribute to the substrate site. Residues 93 to 95, E103, and 128 to 134 contribute to the ATP site; these read GLR and SRPITAT.

It belongs to the bacterial CoaD family. In terms of assembly, homohexamer. It depends on Mg(2+) as a cofactor.

Its subcellular location is the cytoplasm. It carries out the reaction (R)-4'-phosphopantetheine + ATP + H(+) = 3'-dephospho-CoA + diphosphate. Its pathway is cofactor biosynthesis; coenzyme A biosynthesis; CoA from (R)-pantothenate: step 4/5. In terms of biological role, reversibly transfers an adenylyl group from ATP to 4'-phosphopantetheine, yielding dephospho-CoA (dPCoA) and pyrophosphate. The protein is Phosphopantetheine adenylyltransferase of Sinorhizobium fredii (strain NBRC 101917 / NGR234).